A 393-amino-acid polypeptide reads, in one-letter code: uncharacterized protein (393 aa).

A TRAM domain is found at 12-70 (APLLGSKIKLNIEKLAIGGAGVARHEGMVVFVPQAAPNEEILAEITLVKKNFMEARVVE). The [4Fe-4S] cluster site is built by Cys83, Cys89, Cys92, and Cys166. S-adenosyl-L-methionine contacts are provided by Gln221, Tyr250, Glu273, and Asp316. Cys343 serves as the catalytic Nucleophile.

It belongs to the class I-like SAM-binding methyltransferase superfamily. RNA M5U methyltransferase family.

This is an uncharacterized protein from Bdellovibrio bacteriovorus (strain ATCC 15356 / DSM 50701 / NCIMB 9529 / HD100).